A 669-amino-acid chain; its full sequence is Cytokinesis protein 2 (669 aa).

The F-BAR domain occupies 1 to 261 (MSYSYEACFW…HLNSFTAADE (261 aa)). Positions 134–200 (KKGCEVLQKK…LKQEYKASQK (67 aa)) form a coiled coil. A phosphoserine mark is found at S337 and S366. The segment at 372–518 (VQLQSNVDDS…DYNTRRDTST (147 aa)) is disordered. 2 stretches are compositionally biased toward basic and acidic residues: residues 381-391 (SVLRQKPDKPR) and 397-413 (EQLK…EKGL). Position 421 is a phosphoserine (S421). 2 stretches are compositionally biased toward low complexity: residues 421–431 (SLSSPSESSSS) and 445–455 (MESMTTSVSSM). The region spanning 599–667 (PVIEYAKAMY…PYNFIQLLHQ (69 aa)) is the SH3 domain.

Interacts with INN1.

It is found in the cytoplasm. It localises to the cytoskeleton. The protein localises to the bud neck. In terms of biological role, throughout most of the cell cycle it forms a double ring that coincides with the septins. After the onset of mitosis, forms a ring-like structure which colocalizes with the medial actin ring. Mediates cytoskeletal rearrangements required for cytokinesis. In conjunction with the medial actin ring exhibits contraction-like action. The sequence is that of Cytokinesis protein 2 (HOF1) from Saccharomyces cerevisiae (strain ATCC 204508 / S288c) (Baker's yeast).